The following is a 123-amino-acid chain: 1,4-dihydroxy-2-naphthoyl-CoA hydrolase (123 aa).

The active-site Nucleophile or proton acceptor is the glutamate 46.

This sequence belongs to the thioesterase PaaI family.

It catalyses the reaction 1,4-dihydroxy-2-naphthoyl-CoA + H2O = 1,4-dihydroxy-2-naphthoate + CoA + H(+). The protein operates within quinol/quinone metabolism; menaquinone biosynthesis. In terms of biological role, catalyzes the hydrolysis of 1,4-dihydroxy-2-naphthoyl-CoA (DHNA-CoA) to 1,4-dihydroxy-2-naphthoate (DHNA) and free coenzyme A. Production of DHNA is required for protection against bacteriolysis in the cytosol of macrophages and tissue-specific virulence in vivo, suggesting that MenI is required to protect the bacteria from killing in the macrophage cytosol. The chain is 1,4-dihydroxy-2-naphthoyl-CoA hydrolase from Listeria monocytogenes serotype 1/2a (strain 10403S).